The primary structure comprises 561 residues: MAANEYDYIIVGAGSAGNVLASRLTEDADVTVLLLEAGGPDYRFDFRTQMPAALAFPLQGRRYNWAYETDPEPHMNNRRMECGRGKGLGGSSLINGMCYIRGNALDYDGWAAHAGLENWTYLDCLPYFRKAETRDAGANAYHGGDGPVHVTTSKPGNNPLFAAMVEAGVQAGFPRTDDLNGYQQEGFGPMDRTVTANGRRASTARGYLDRAKTRPNLTIVTHAVTDRVLFSGKRAVGVAYLHHGNAVNAQARREVLVCSGAIASPQLLQRSGVGRSTWLRELDVPLVHDLPGVGENLQDHLEMYIQYECKEPISLYPALQWWNQPAIGLEWMLKGTGIGASNQFEAGGFIRTRDDDLWPNIQYHFLPVAINYNGSNAIKMHGFQAHVGSMRSPSRGRVKLTSRDPNAHPSILFNYMADPLDWREFRDGIRITREIMRQPALDRYRGRELNPGAELTTDEQLDTFVRMRAETAFHPSCSCKMGYDDMAVVDNEGRVHGMEALRVVDASIMPRITTGNLNAPTIMLAEKIADRIHGREPLARVDTPYFVANGVASRKQESATV.

Position 7–36 (7–36) interacts with FAD; that stretch reads DYIIVGAGSAGNVLASRLTEDADVTVLLLE. The Proton acceptor role is filled by histidine 474.

This sequence belongs to the GMC oxidoreductase family. Requires FAD as cofactor.

It carries out the reaction choline + A = betaine aldehyde + AH2. The catalysed reaction is betaine aldehyde + NAD(+) + H2O = glycine betaine + NADH + 2 H(+). The protein operates within amine and polyamine biosynthesis; betaine biosynthesis via choline pathway; betaine aldehyde from choline (cytochrome c reductase route): step 1/1. Functionally, involved in the biosynthesis of the osmoprotectant glycine betaine. Catalyzes the oxidation of choline to betaine aldehyde and betaine aldehyde to glycine betaine at the same rate. This Paraburkholderia phytofirmans (strain DSM 17436 / LMG 22146 / PsJN) (Burkholderia phytofirmans) protein is Oxygen-dependent choline dehydrogenase.